Reading from the N-terminus, the 407-residue chain is Subtilisin-like protease CPC735_013710 (407 aa).

Positions 1–17 (MQLLNLSLFFLLPFATA) are cleaved as a signal peptide. The propeptide occupies 18 to 115 (NPIPQDSQNI…VLPDQKIYLA (98 aa)). Positions 31-114 (QYIVTLKDGL…SVLPDQKIYL (84 aa)) constitute an Inhibitor I9 domain. A Peptidase S8 domain is found at 124–407 (GWNLGYMSSK…VAYNGIQEML (284 aa)). An N-linked (GlcNAc...) asparagine glycan is attached at asparagine 145. Catalysis depends on charge relay system residues aspartate 162 and histidine 194. N-linked (GlcNAc...) asparagine glycosylation is found at asparagine 241, asparagine 254, and asparagine 341. Serine 350 serves as the catalytic Charge relay system. The N-linked (GlcNAc...) asparagine glycan is linked to asparagine 381.

It belongs to the peptidase S8 family.

The protein resides in the secreted. Its function is as follows. Secreted subtilisin-like serine protease with keratinolytic activity that contributes to pathogenicity. The chain is Subtilisin-like protease CPC735_013710 from Coccidioides posadasii (strain C735) (Valley fever fungus).